A 679-amino-acid polypeptide reads, in one-letter code: Stress-70 protein, mitochondrial (679 aa).

Residues 1-46 (MISASRAAVSRFVGTAASRGPTAARHQDGWNGLSHEAFRIVSRRDY) constitute a mitochondrion transit peptide. The tract at residues 1-432 (MISASRAAVS…IQGGVLAGDV (432 aa)) is interaction with NFS1. 2 residues coordinate ADP: T63 and N64. Positions 63–431 (TNSCVAVMEG…AIQGGVLAGD (369 aa)) are nucleotide-binding domain (NBD). K76 is modified (N6-acetyllysine). T87 carries the phosphothreonine modification. Residues K135 and K138 each carry the N6-acetyllysine; alternate modification. Residues K135 and K138 each carry the N6-succinyllysine; alternate modification. The residue at position 143 (K143) is an N6-acetyllysine. K206 carries the post-translational modification N6-acetyllysine; alternate. Position 206 is an N6-succinyllysine; alternate (K206). K206 bears the N6-malonyllysine; alternate mark. K234 and K288 each carry N6-acetyllysine. K300 carries the post-translational modification N6-acetyllysine; alternate. K300 carries the N6-succinyllysine; alternate modification. Residues E313, K316, and S320 each coordinate ADP. The residue at position 368 (K368) is an N6-succinyllysine. ADP-binding residues include G388 and R391. Residue K394 is modified to N6-succinyllysine. S408 bears the Phosphoserine mark. Residues 432–441 (VTDVLLLDVT) are interdomain linker. Positions 432–679 (VTDVLLLDVT…QKDNQKEEKQ (248 aa)) are interaction with FXN and ISCU. Residues 442–679 (PLSLGIETLG…QKDNQKEEKQ (238 aa)) are substrate-binding domain (SBD). R513 is modified (omega-N-methylarginine). N6-acetyllysine; alternate occurs at positions 567 and 600. Residues K567 and K600 each carry the N6-succinyllysine; alternate modification. An N6-succinyllysine modification is found at K610. K612 carries the N6-acetyllysine modification. N6-acetyllysine; alternate is present on K646. K646 is modified (N6-succinyllysine; alternate). The disordered stretch occupies residues 656 to 679 (ASEREGSGSSGTGEQKDNQKEEKQ). Residues 669-679 (EQKDNQKEEKQ) are compositionally biased toward basic and acidic residues.

This sequence belongs to the heat shock protein 70 family. In terms of assembly, interacts strongly with the intermediate form of FXN and weakly with its mature form. Interacts with HSCB. Associates with the mitochondrial contact site and cristae organizing system (MICOS) complex, composed of at least MICOS10/MIC10, CHCHD3/MIC19, CHCHD6/MIC25, APOOL/MIC27, IMMT/MIC60, APOO/MIC23/MIC26 and QIL1/MIC13. This complex was also known under the names MINOS or MitOS complex. The MICOS complex associates with mitochondrial outer membrane proteins SAMM50, MTX1, MTX2 and DNAJC11, mitochondrial inner membrane protein TMEM11 and with HSPA9. Interacts with DNLZ, the interaction is required to prevent self-aggregation. Interacts with TESPA1. Interacts with PDPN. Interacts with NFU1, NFS1 and ISCU. Interacts with TP53; the interaction promotes TP53 degradation. Interacts (via SBD domain) with UBXN2A; the interaction with UBXN2A inhibits HSPA9/MOT-2 interaction with and degradation of TP53, thereby promotes TP53 translocation to the nucleus. Interacts with ITPR1 AND VDAC1; this interaction couples ITPR1 to VDAC1. Component of the TIM23 mitochondrial inner membrane pre-sequence translocase complex.

The protein resides in the mitochondrion. Its subcellular location is the nucleus. It localises to the nucleolus. It is found in the cytoplasm. The protein localises to the mitochondrion matrix. It carries out the reaction ATP + H2O = ADP + phosphate + H(+). The chaperone activity is regulated by ATP-induced allosteric coupling of the nucleotide-binding (NBD) and substrate-binding (SBD) domains. ATP binding in the NBD leads to a conformational change in the NBD, which is transferred through the interdomain linker (IDL) to the substrate-binding domain (SBD). This elicits a reduced substrate affinity and a faster substrate exchange rate. Upon hydrolysis of ATP to ADP, the protein undergoes a conformational change that increases its affinity for substrate proteins. It cycles through repeated phases of ATP hydrolysis and nucleotide exchange, facilitating repeated cycles of substrate binding and release. Functions in collaboration with co-chaperones. Functions with the co-chaperone, DNLZ, to maintain solubility and regulate ATP hydrolysis. Nucleotide exchange factors, GRPEL1 and GRPEL2, accelerate nucleotide exchange. In terms of biological role, mitochondrial chaperone that plays a key role in mitochondrial protein import, folding, and assembly. Plays an essential role in the protein quality control system, the correct folding of proteins, the re-folding of misfolded proteins, and the targeting of proteins for subsequent degradation. These processes are achieved through cycles of ATP binding, ATP hydrolysis, and ADP release, mediated by co-chaperones. In mitochondria, it associates with the TIM (translocase of the inner membrane) protein complex to assist in the import and folding of mitochondrial proteins. Plays an important role in mitochondrial iron-sulfur cluster (ISC) biogenesis, interacts with and stabilizes ISC cluster assembly proteins FXN, NFU1, NFS1 and ISCU. Regulates erythropoiesis via stabilization of ISC assembly. Regulates mitochondrial calcium-dependent apoptosis by coupling two calcium channels, ITPR1 and VDAC1, at the mitochondria-associated endoplasmic reticulum (ER) membrane to facilitate calcium transport from the ER lumen to the mitochondria intermembrane space, providing calcium for the downstream calcium channel MCU, which releases it into the mitochondrial matrix. Although primarily located in the mitochondria, it is also found in other cellular compartments. In the cytosol, it associates with proteins involved in signaling, apoptosis, or senescence. It may play a role in cell cycle regulation via its interaction with and promotion of degradation of TP53. May play a role in the control of cell proliferation and cellular aging. Protects against reactive oxygen species (ROS). Extracellular HSPA9 plays a cytoprotective role by preventing cell lysis following immune attack by the membrane attack complex by disrupting formation of the complex. In Bos taurus (Bovine), this protein is Stress-70 protein, mitochondrial.